A 288-amino-acid chain; its full sequence is Probable pectinesterase 56 (288 aa).

The first 27 residues, 1-27 (MAMTSTMQLLVLSFLVIASLFLGATVA), serve as a signal peptide directing secretion. Residues Asn55 and Asn95 are each glycosylated (N-linked (GlcNAc...) asparagine). Residues Thr120 and Gln150 each contribute to the substrate site. The Proton donor role is filled by Asp173. The active-site Nucleophile is the Asp194. A glycan (N-linked (GlcNAc...) asparagine) is linked at Asn242. 2 residues coordinate substrate: Arg262 and Trp264.

It belongs to the pectinesterase family.

The protein resides in the secreted. It localises to the cell wall. It carries out the reaction [(1-&gt;4)-alpha-D-galacturonosyl methyl ester](n) + n H2O = [(1-&gt;4)-alpha-D-galacturonosyl](n) + n methanol + n H(+). It functions in the pathway glycan metabolism; pectin degradation; 2-dehydro-3-deoxy-D-gluconate from pectin: step 1/5. Acts in the modification of cell walls via demethylesterification of cell wall pectin. This Arabidopsis thaliana (Mouse-ear cress) protein is Probable pectinesterase 56 (PME56).